Reading from the N-terminus, the 234-residue chain is Synaptogyrin-1 (234 aa).

N-acetylmethionine is present on M1. At 1 to 23 (MEGGAYGAGKAGGAFDPYTLVRQ) the chain is on the cytoplasmic side. Residues 20-173 (LVRQPHTILR…QAVLAFQRYQ (154 aa)) form the MARVEL domain. Residues 24-44 (PHTILRVVSWVFSIVVFGSIV) traverse the membrane as a helical segment. At 45-71 (NEGYLNNPEEEEEFCIYNRNPNACSYG) the chain is on the lumenal side. A helical transmembrane segment spans residues 72 to 92 (VTVGVLAFLTCLVYLALDVYF). At 93 to 104 (PQISSVKDRKKA) the chain is on the cytoplasmic side. The helical transmembrane segment at 105–125 (VLSDIGVSAFWAFFWFVGFCF) threads the bilayer. Residues 126-148 (LANQWQVSKPKDNPLNEGTDAAR) are Lumenal-facing. A helical transmembrane segment spans residues 149–169 (AAIAFSFFSIFTWAGQAVLAF). Residues 170 to 234 (QRYQIGADSA…EPQGYQSQGY (65 aa)) are Cytoplasmic-facing. The disordered stretch occupies residues 201–234 (EPSAGSDPTGMGGTYQHPANAFDAEPQGYQSQGY).

This sequence belongs to the synaptogyrin family. Nervous system (at protein level).

The protein resides in the cytoplasmic vesicle. Its subcellular location is the secretory vesicle. It is found in the synaptic vesicle membrane. The protein localises to the melanosome. May play a role in regulated exocytosis. Modulates the localization of synaptophysin/SYP into synaptic-like microvesicles and may therefore play a role in synaptic-like microvesicle formation and/or maturation. Involved in the regulation of short-term and long-term synaptic plasticity. The protein is Synaptogyrin-1 of Rattus norvegicus (Rat).